Here is a 599-residue protein sequence, read N- to C-terminus: Elongation factor 4 (599 aa).

The tr-type G domain occupies 4–186 (DNIRNFSIIA…EIVNKIPPPR (183 aa)). Residues 16 to 21 (DHGKST) and 133 to 136 (NKID) contribute to the GTP site.

Belongs to the TRAFAC class translation factor GTPase superfamily. Classic translation factor GTPase family. LepA subfamily.

Its subcellular location is the cell inner membrane. The enzyme catalyses GTP + H2O = GDP + phosphate + H(+). Required for accurate and efficient protein synthesis under certain stress conditions. May act as a fidelity factor of the translation reaction, by catalyzing a one-codon backward translocation of tRNAs on improperly translocated ribosomes. Back-translocation proceeds from a post-translocation (POST) complex to a pre-translocation (PRE) complex, thus giving elongation factor G a second chance to translocate the tRNAs correctly. Binds to ribosomes in a GTP-dependent manner. The chain is Elongation factor 4 from Geotalea daltonii (strain DSM 22248 / JCM 15807 / FRC-32) (Geobacter daltonii).